The chain runs to 243 residues: Large ribosomal subunit protein uL2 (243 aa).

Residues 198-243 (VDHPFGGGGRQHPGKPKSVSRDTPPGRKVGDIASKRTGRGGKGGQE) are disordered. Over residues 221–231 (PPGRKVGDIAS) the composition is skewed to basic and acidic residues.

This sequence belongs to the universal ribosomal protein uL2 family. As to quaternary structure, part of the 50S ribosomal subunit. Forms a bridge to the 30S subunit in the 70S ribosome.

In terms of biological role, one of the primary rRNA binding proteins. Required for association of the 30S and 50S subunits to form the 70S ribosome, for tRNA binding and peptide bond formation. It has been suggested to have peptidyltransferase activity; this is somewhat controversial. Makes several contacts with the 16S rRNA in the 70S ribosome. In Natronomonas pharaonis (strain ATCC 35678 / DSM 2160 / CIP 103997 / JCM 8858 / NBRC 14720 / NCIMB 2260 / Gabara) (Halobacterium pharaonis), this protein is Large ribosomal subunit protein uL2.